The sequence spans 501 residues: NAD(P)H-quinone oxidoreductase chain 4, chloroplastic (501 aa).

15 consecutive transmembrane segments (helical) span residues 4 to 24 (FPWLTIIVLLPISAGLLIPLL), 37 to 57 (LGICLVEFLLITYIFCNYFHF), 87 to 107 (IGLILLTGFITTLATLAAWPI), 113 to 130 (LSYFLMLAMYSGQVGLFA), 134 to 154 (ILLFFFMWELELIPVYLLLSM), 167 to 187 (FILYTAGSSVFLLMGALTMGL), 207 to 227 (IGLEIILYLGFFIAYAVKLPM), 242 to 262 (HYSTCMLLAGILLKMGGYGLI), 274 to 294 (SIFAPWLVVIGAIQIVYSALT), 310 to 330 (VSHMGFVLIGIGSTTDIGVNG), 331 to 351 (AILQMISHGLIGAALFFSAGV), 364 to 384 (MGGIATSIPKIFTMFSSFSMA), 385 to 405 (SLALPGLSGFVAELMIFLGIV), 416 to 436 (VVIIIVAATGIILTPIYLLSM), and 462 to 482 (IFIFICLFFPIIGIGFYPKLV).

This sequence belongs to the complex I subunit 4 family.

It localises to the plastid. The protein resides in the chloroplast thylakoid membrane. It catalyses the reaction a plastoquinone + NADH + (n+1) H(+)(in) = a plastoquinol + NAD(+) + n H(+)(out). The catalysed reaction is a plastoquinone + NADPH + (n+1) H(+)(in) = a plastoquinol + NADP(+) + n H(+)(out). In Anthoceros angustus (Hornwort), this protein is NAD(P)H-quinone oxidoreductase chain 4, chloroplastic (ndhD).